The primary structure comprises 1095 residues: Voltage-gated inwardly rectifying potassium channel KCNH3 (1095 aa).

Residues 1-228 lie on the Cytoplasmic side of the membrane; sequence MPAMRGLLAP…HCGALRATWD (228 aa). A PAS domain is found at 18 to 90; sequence IATRFDGTHS…QQIRKALDEH (73 aa). One can recognise a PAC domain in the interval 93–145; it reads FKAELILYRKSGLPFWCLLDVIPIKNEKGEVALFLVSHKDISETKNRGGPDNW. The segment covering 137–150 has biased composition (basic and acidic residues); that stretch reads KNRGGPDNWKERGG. The interval 137–161 is disordered; it reads KNRGGPDNWKERGGGRRRYGRAGSK. The chain crosses the membrane as a helical span at residues 229–249; that stretch reads GFILLATLYVAVTVPYSVCVS. At 250–259 the chain is on the extracellular side; sequence TAREPSAARG. The helical transmembrane segment at 260–280 threads the bilayer; it reads PPSVCDLAVEVLFILDIVLNF. Topologically, residues 281-302 are cytoplasmic; the sequence is RTTFVSKSGQVVFAPKSICLHY. A helical transmembrane segment spans residues 303–323; it reads VTTWFLLDVIAALPFDLLHAF. Residues 324–331 are Extracellular-facing; sequence KVNVYVGA. A helical; Voltage-sensor membrane pass occupies residues 332–352; sequence HLLKTVRLLRLLRLLPRLDRY. At 353–361 the chain is on the cytoplasmic side; it reads SQYSAVVLT. The helical transmembrane segment at 362–382 threads the bilayer; it reads LLMAVFALLAHWVACVWFYIG. The Extracellular segment spans residues 383-464; it reads QQEIESSESE…GGPSLRSAYI (82 aa). The segment at 417–447 is disordered; the sequence is PDGGNSSGQSENCSSSSSSSGSGGGRGSEAN. Residues 419–436 are compositionally biased toward low complexity; the sequence is GGNSSGQSENCSSSSSSS. Residues Asn-421, Asn-428, and Asn-447 are each glycosylated (N-linked (GlcNAc...) asparagine). The pore-forming intramembrane region spans 465–485; that stretch reads TSLYFALSSLTSVGFGNVSAN. The short motif at 476 to 481 is the Selectivity filter element; sequence SVGFGN. At 486-490 the chain is on the extracellular side; the sequence is TDTEK. Residues 491 to 511 traverse the membrane as a helical segment; it reads IFSICTMLIGALMHAVVFGNV. Topologically, residues 512–1095 are cytoplasmic; the sequence is TAIIQRMYAR…QWTQEEGTGV (584 aa). An a nucleoside 3',5'-cyclic phosphate-binding site is contributed by 593–708; the sequence is LFEAASRGCL…FAPRFSRGLR (116 aa). Disordered regions lie at residues 740-823, 854-883, and 965-1069; these read EEKE…LPPM, VGQS…PSEA, and GSVL…PWDP. Residues 784-796 show a composition bias toward basic residues; the sequence is TAPRPRLGGRGRP. Positions 857-872 are enriched in low complexity; that stretch reads SGPECSSSPSPGTESG. Residues 974–991 are compositionally biased toward pro residues; that stretch reads HPRPGQPPPLMAPWPWGP.

Belongs to the potassium channel family. H (Eag) (TC 1.A.1.20) subfamily. Kv12.2/KCNH3 sub-subfamily. As to quaternary structure, the potassium channel is probably composed of a homo- or heterotetrameric complex of pore-forming alpha subunits that can associate with modulating beta subunits. Interacts with KCNE1 and KCNE3; these interactions regulate KCNH3 trafficking to the plasma membrane and its subsequent voltage-gated potassium channel activity. N-glycosylated. N-glycosylation mediates traffick to the cell membrane but is not necessary for voltage-gated potassium channel activity. In terms of tissue distribution, detected in brain, but not in other tissues.

It is found in the cell membrane. It catalyses the reaction K(+)(in) = K(+)(out). Functionally, pore-forming (alpha) subunit of a voltage-gated inwardly rectifying potassium channel. Charactherized by a fast rate of activation during depolarization followed by a rapid inactivation at much more depolarized value causing inward rectification due to a C-type inactivation mechanism. Exhibits a rapid recovery from inactivation. The sequence is that of Voltage-gated inwardly rectifying potassium channel KCNH3 from Mus musculus (Mouse).